The sequence spans 534 residues: Benzaldehyde dehydrogenase, mitochondrial (534 aa).

Residues 1-29 constitute a mitochondrion transit peptide; the sequence is MAAHRFSSLLSRSVPLLSRGGKQSYLGRG. Residues 199–202, 225–228, 258–259, 278–279, and 301–303 each bind NAD(+); these read IPWN, KTAE, GP, GS, and ELG. Residue Glu-301 is the Proton acceptor of the active site. Cys-335 (nucleophile) is an active-site residue. NAD(+)-binding positions include 381–385 and 432–434; these read DQFEK and EIF.

It belongs to the aldehyde dehydrogenase family. As to quaternary structure, homotetramer. Expressed predominantly in the upper and lower flower petal lobes, and, at low levels, in flower tubes, pistils, stamens and sepals.

It localises to the mitochondrion. It catalyses the reaction an aldehyde + NAD(+) + H2O = a carboxylate + NADH + 2 H(+). The enzyme catalyses acetaldehyde + NAD(+) + H2O = acetate + NADH + 2 H(+). It carries out the reaction benzaldehyde + NAD(+) + H2O = benzoate + NADH + 2 H(+). The catalysed reaction is 2-phenylacetaldehyde + NAD(+) + H2O = 2-phenylacetate + NADH + 2 H(+). It functions in the pathway aromatic compound metabolism. With respect to regulation, inhibited by disulfiram. Its function is as follows. Component of the floral volatile benzenoid/phenylpropanoid (FVBP) biosynthetic pathway. Catalyzes the oxidation of benzaldehyde to benzoic acid (BA). Capable of oxidizing a broad spectrum of aliphatic aldehydes; increased carbon chain length results in a decrease in its efficiency. The protein is Benzaldehyde dehydrogenase, mitochondrial of Antirrhinum majus (Garden snapdragon).